Here is a 314-residue protein sequence, read N- to C-terminus: Homoserine O-succinyltransferase (314 aa).

Cys-142 acts as the Acyl-thioester intermediate in catalysis. Residues Lys-163 and Ser-192 each coordinate substrate. Catalysis depends on His-235, which acts as the Proton acceptor. The active site involves Glu-237. Substrate is bound at residue Arg-249.

Belongs to the MetA family.

Its subcellular location is the cytoplasm. It carries out the reaction L-homoserine + succinyl-CoA = O-succinyl-L-homoserine + CoA. The protein operates within amino-acid biosynthesis; L-methionine biosynthesis via de novo pathway; O-succinyl-L-homoserine from L-homoserine: step 1/1. In terms of biological role, transfers a succinyl group from succinyl-CoA to L-homoserine, forming succinyl-L-homoserine. The protein is Homoserine O-succinyltransferase of Shewanella pealeana (strain ATCC 700345 / ANG-SQ1).